Consider the following 328-residue polypeptide: Beta-agarase C (328 aa).

The first 17 residues, 1 to 17 (MNLTKMAVFAASLFCLA), serve as a signal peptide directing secretion. Positions 18–67 (CKNDIDTELEKKSIPESEIQKSEEKLPNEEELTPTDPDEETNKEETVTAN) are excised as a propeptide. A compositionally biased stretch (basic and acidic residues) spans 26–45 (LEKKSIPESEIQKSEEKLPN). A disordered region spans residues 26–61 (LEKKSIPESEIQKSEEKLPNEEELTPTDPDEETNKE). Residues 46–59 (EEELTPTDPDEETN) show a composition bias toward acidic residues. A GH16 domain is found at 70–328 (YDFTGNTPPP…WIHTYQLVEE (259 aa)). Residues W110, 119–129 (KAENSGVSDGK), 133–135 (KAT), E188, E193, and R224 each bind substrate. E188 (nucleophile) is an active-site residue. Residue E193 is the Proton donor of the active site.

It belongs to the glycosyl hydrolase 16 family.

Its subcellular location is the secreted. The catalysed reaction is Hydrolysis of (1-&gt;4)-beta-D-galactosidic linkages in agarose, giving the tetramer as the predominant product.. Its function is as follows. Cleaves the beta-1,4-linkages between beta-D-galactose and alpha-L-3,6-anhydro-galactose residues in agarose. Cleaves agarose in a random manner with retention of the anomeric-bond configuration, producing beta-anomers that give rise progressively to alpha-anomers when mutarotation takes place. This is Beta-agarase C (agaC) from Zobellia galactanivorans (strain DSM 12802 / CCUG 47099 / CIP 106680 / NCIMB 13871 / Dsij).